The following is a 702-amino-acid chain: Translation factor GUF1 homolog, chloroplastic (702 aa).

Positions M1–P30 are enriched in low complexity. Positions M1–N41 are disordered. Residues S87–P283 enclose the tr-type G domain. GTP contacts are provided by residues A96 to S103, D162 to H166, and N216 to D219.

This sequence belongs to the TRAFAC class translation factor GTPase superfamily. Classic translation factor GTPase family. LepA subfamily.

It is found in the plastid. The protein resides in the chloroplast. The catalysed reaction is GTP + H2O = GDP + phosphate + H(+). Promotes chloroplast protein synthesis. May act as a fidelity factor of the translation reaction, by catalyzing a one-codon backward translocation of tRNAs on improperly translocated ribosomes. This chain is Translation factor GUF1 homolog, chloroplastic, found in Micromonas pusilla (strain CCMP1545) (Picoplanktonic green alga).